The following is a 306-amino-acid chain: Ribonuclease Z (306 aa).

Zn(2+)-binding residues include histidine 63, histidine 65, aspartate 67, histidine 68, histidine 141, aspartate 211, and histidine 269. Aspartate 67 serves as the catalytic Proton acceptor.

This sequence belongs to the RNase Z family. In terms of assembly, homodimer. Zn(2+) is required as a cofactor.

It carries out the reaction Endonucleolytic cleavage of RNA, removing extra 3' nucleotides from tRNA precursor, generating 3' termini of tRNAs. A 3'-hydroxy group is left at the tRNA terminus and a 5'-phosphoryl group is left at the trailer molecule.. Functionally, zinc phosphodiesterase, which displays some tRNA 3'-processing endonuclease activity. Probably involved in tRNA maturation, by removing a 3'-trailer from precursor tRNA. The chain is Ribonuclease Z from Staphylococcus haemolyticus (strain JCSC1435).